Reading from the N-terminus, the 354-residue chain is S-adenosylmethionine:tRNA ribosyltransferase-isomerase (354 aa).

Belongs to the QueA family. In terms of assembly, monomer.

It localises to the cytoplasm. The enzyme catalyses 7-aminomethyl-7-carbaguanosine(34) in tRNA + S-adenosyl-L-methionine = epoxyqueuosine(34) in tRNA + adenine + L-methionine + 2 H(+). The protein operates within tRNA modification; tRNA-queuosine biosynthesis. Transfers and isomerizes the ribose moiety from AdoMet to the 7-aminomethyl group of 7-deazaguanine (preQ1-tRNA) to give epoxyqueuosine (oQ-tRNA). This Salmonella newport (strain SL254) protein is S-adenosylmethionine:tRNA ribosyltransferase-isomerase.